Here is a 400-residue protein sequence, read N- to C-terminus: Putative lysosomal acid lipase/cholesteryl ester hydrolase (400 aa).

The first 17 residues, 1 to 17 (MWRLIIIAILFQGLVNS), serve as a signal peptide directing secretion. 3 N-linked (GlcNAc...) asparagine glycosylation sites follow: Asn34, Asn129, and Asn159. The AB hydrolase-1 domain maps to 78–378 (PAVFLQHGLL…EWEHLDFIWG (301 aa)). The Charge relay system role is filled by Ser172. N-linked (GlcNAc...) asparagine glycosylation is present at Asn271. The active-site Charge relay system is His372.

Belongs to the AB hydrolase superfamily. Lipase family. In terms of tissue distribution, expressed by the venom gland.

Its subcellular location is the secreted. The catalysed reaction is a sterol ester + H2O = a sterol + a fatty acid + H(+). In physiological conditions, is crucial for intracellular hydrolysis of cholesteryl esters and triglycerides that have been internalized via receptor-mediated endocytosis of lipoprotein particles. In venom, the biological contribution is unknown. The chain is Putative lysosomal acid lipase/cholesteryl ester hydrolase from Crotalus adamanteus (Eastern diamondback rattlesnake).